We begin with the raw amino-acid sequence, 183 residues long: Adenine phosphoribosyltransferase (183 aa).

This sequence belongs to the purine/pyrimidine phosphoribosyltransferase family. In terms of assembly, homodimer.

It localises to the cytoplasm. The enzyme catalyses AMP + diphosphate = 5-phospho-alpha-D-ribose 1-diphosphate + adenine. Its pathway is purine metabolism; AMP biosynthesis via salvage pathway; AMP from adenine: step 1/1. In terms of biological role, catalyzes a salvage reaction resulting in the formation of AMP, that is energically less costly than de novo synthesis. In Escherichia coli O157:H7, this protein is Adenine phosphoribosyltransferase.